A 206-amino-acid polypeptide reads, in one-letter code: Glycerol-3-phosphate acyltransferase (206 aa).

A run of 5 helical transmembrane segments spans residues 3-23 (LGWL…SYII), 51-71 (VGPA…AVVV), 83-103 (FAAA…YYGF), 113-133 (IGVL…IAIG), and 162-182 (WFGY…LSMW).

Belongs to the PlsY family. In terms of assembly, probably interacts with PlsX.

It localises to the cell membrane. The catalysed reaction is an acyl phosphate + sn-glycerol 3-phosphate = a 1-acyl-sn-glycero-3-phosphate + phosphate. Its pathway is lipid metabolism; phospholipid metabolism. Catalyzes the transfer of an acyl group from acyl-phosphate (acyl-PO(4)) to glycerol-3-phosphate (G3P) to form lysophosphatidic acid (LPA). This enzyme utilizes acyl-phosphate as fatty acyl donor, but not acyl-CoA or acyl-ACP. The protein is Glycerol-3-phosphate acyltransferase of Halalkalibacterium halodurans (strain ATCC BAA-125 / DSM 18197 / FERM 7344 / JCM 9153 / C-125) (Bacillus halodurans).